The following is a 701-amino-acid chain: MRPVTDIQRTDRPFEVVTDMVPAGDQPAAIEELARRIQGGAADTVLLGATGTGKTATVAWLIERLQRPTLVIQPNKTLAAQFANELREMMPHNAVEYFVSYYDYYQPEAYVPQTDTYIEKDSSINEEVERLRHSATTALLTRRDTVVVASVSCIYGLGTPQEYVDRMATVEVGMEIDRDELLRRLVEMQYTRNDVAFTRGTFRVRGDTVEIIPVYDELAVRIEMFGDEIERLMTLHPITGEVLGESDRVYIFPASHYVAGPERMRKAIAGIQAELEERLAELEAAGKLLEAQRLRMRTTYDVEMLEQMGTCAGVENYSRHFDGRAPGSPPNTLLDYFPEDFLVVIDESHVTVPQIGGMYEGDAARKRTLVEHGFRLPSAMDNRPLTWDEFRERTGQTLYLSATPGPYELERVGGDVVEQVIRPTGLVDPEVIVKPTEGQIDDLVHEIRIRAERDERVLVTTLTKKMAEDLTDYLTDLGIRVRYLHSEIDTLRRVELLRELRVGVFDVLVGINLLREGLDLPEVSLVAILDADKEGFLRSERSLIQTIGRAARHVSGQVHMYADTVTDAMAAAIEETNRRRAKQLAYNAEHGIDPKPLRKKIADILDSLAREDADTAELLARSRGEKRGTPTPRSGALSGPDRVAEQAKNLPREELAALVEQLTEQMHQAAADLQFELAARLRDEIKELKRELRGMEEAGIG.

Positions 35-422 (RRIQGGAADT…GGDVVEQVIR (388 aa)) constitute a Helicase ATP-binding domain. 48 to 55 (GATGTGKT) contacts ATP. The short motif at 101–124 (YYDYYQPEAYVPQTDTYIEKDSSI) is the Beta-hairpin element. In terms of domain architecture, Helicase C-terminal spans 439-605 (QIDDLVHEIR…PLRKKIADIL (167 aa)). The disordered stretch occupies residues 620-648 (ARSRGEKRGTPTPRSGALSGPDRVAEQAK). The UVR domain occupies 656–691 (AALVEQLTEQMHQAAADLQFELAARLRDEIKELKRE).

This sequence belongs to the UvrB family. In terms of assembly, forms a heterotetramer with UvrA during the search for lesions. Interacts with UvrC in an incision complex.

The protein localises to the cytoplasm. Functionally, the UvrABC repair system catalyzes the recognition and processing of DNA lesions. A damage recognition complex composed of 2 UvrA and 2 UvrB subunits scans DNA for abnormalities. Upon binding of the UvrA(2)B(2) complex to a putative damaged site, the DNA wraps around one UvrB monomer. DNA wrap is dependent on ATP binding by UvrB and probably causes local melting of the DNA helix, facilitating insertion of UvrB beta-hairpin between the DNA strands. Then UvrB probes one DNA strand for the presence of a lesion. If a lesion is found the UvrA subunits dissociate and the UvrB-DNA preincision complex is formed. This complex is subsequently bound by UvrC and the second UvrB is released. If no lesion is found, the DNA wraps around the other UvrB subunit that will check the other stand for damage. This is UvrABC system protein B from Thermobifida fusca (strain YX).